Here is a 314-residue protein sequence, read N- to C-terminus: Acetyl-coenzyme A carboxylase carboxyl transferase subunit alpha (314 aa).

The 258-residue stretch at 32–289 folds into the CoA carboxyltransferase C-terminal domain; sequence EIDMLEASLK…KKMFLKHLNE (258 aa).

Belongs to the AccA family. In terms of assembly, acetyl-CoA carboxylase is a heterohexamer composed of biotin carboxyl carrier protein (AccB), biotin carboxylase (AccC) and two subunits each of ACCase subunit alpha (AccA) and ACCase subunit beta (AccD).

It localises to the cytoplasm. It carries out the reaction N(6)-carboxybiotinyl-L-lysyl-[protein] + acetyl-CoA = N(6)-biotinyl-L-lysyl-[protein] + malonyl-CoA. Its pathway is lipid metabolism; malonyl-CoA biosynthesis; malonyl-CoA from acetyl-CoA: step 1/1. Component of the acetyl coenzyme A carboxylase (ACC) complex. First, biotin carboxylase catalyzes the carboxylation of biotin on its carrier protein (BCCP) and then the CO(2) group is transferred by the carboxyltransferase to acetyl-CoA to form malonyl-CoA. In Staphylococcus epidermidis (strain ATCC 12228 / FDA PCI 1200), this protein is Acetyl-coenzyme A carboxylase carboxyl transferase subunit alpha.